A 148-amino-acid polypeptide reads, in one-letter code: Large ribosomal subunit protein uL13 (148 aa).

Belongs to the universal ribosomal protein uL13 family. In terms of assembly, part of the 50S ribosomal subunit.

This protein is one of the early assembly proteins of the 50S ribosomal subunit, although it is not seen to bind rRNA by itself. It is important during the early stages of 50S assembly. The chain is Large ribosomal subunit protein uL13 from Ureaplasma urealyticum serovar 10 (strain ATCC 33699 / Western).